Reading from the N-terminus, the 170-residue chain is Calcineurin subunit B type 2 (170 aa).

Glycine 2 is lipidated: N-myristoyl glycine. EF-hand domains lie at 18 to 46, 50 to 85, 87 to 122, and 128 to 163; these read DEIKRLGRRFKKLDLDKSGSLSVEEFMSL, RHNPLVRRVIDVFDTDGDGEVDFKEFILGTSQFSVK, DEEQKLRFAFSIYDMDKDGYISNGELFQVLKMMVGN, and QLQQLVDKTIIILDKDGDGKISFEEFSAVVRDLEIH. Ca(2+) contacts are provided by aspartate 31, aspartate 33, serine 35, serine 37, glutamate 42, aspartate 63, aspartate 65, aspartate 67, glutamate 69, glutamate 74, aspartate 100, aspartate 102, aspartate 104, tyrosine 106, and glutamate 111. Positions 131–136 are calcineurin A binding; it reads QLVDKT. Ca(2+)-binding residues include aspartate 141, aspartate 143, aspartate 145, lysine 147, and glutamate 152.

Belongs to the calcineurin regulatory subunit family. In terms of assembly, forms a complex composed of a calmodulin-dependent catalytic subunit (also known as calcineurin A) and a regulatory Ca(2+)-binding subunit (also known as calcineurin B). There are three catalytic subunits, each encoded by a separate gene (PPP3CA, PPP3CB, and PPP3CC) and two regulatory subunits which are also encoded by separate genes (PPP3R1 and PPP3R2). Interacts with SPATA33 (via PQIIIT motif). In terms of tissue distribution, testis-specific.

It is found in the mitochondrion. Functionally, regulatory subunit of calcineurin, a calcium-dependent, calmodulin stimulated protein phosphatase. Confers calcium sensitivity. The protein is Calcineurin subunit B type 2 (PPP3R2) of Homo sapiens (Human).